The following is a 730-amino-acid chain: Polyribonucleotide nucleotidyltransferase (730 aa).

2 residues coordinate Mg(2+): Asp-489 and Asp-495. A KH domain is found at 556 to 615 (PKIDTIKVDVDKIKIVIGKGGETIDKIIEETGVKIDIDEDGNIAIYSSDQEAINRTKEII). The 69-residue stretch at 625–693 (GEIYEAEVVR…DKGRIDASMK (69 aa)) folds into the S1 motif domain. Positions 691–730 (SMKALLPRPPRSEKSNKEDHQSVRHHGSPKDDKGKEKYDK) are disordered. Positions 700–730 (PRSEKSNKEDHQSVRHHGSPKDDKGKEKYDK) are enriched in basic and acidic residues.

It belongs to the polyribonucleotide nucleotidyltransferase family. Mg(2+) serves as cofactor.

It localises to the cytoplasm. It catalyses the reaction RNA(n+1) + phosphate = RNA(n) + a ribonucleoside 5'-diphosphate. Involved in mRNA degradation. Catalyzes the phosphorolysis of single-stranded polyribonucleotides processively in the 3'- to 5'-direction. The protein is Polyribonucleotide nucleotidyltransferase of Streptococcus mutans serotype c (strain ATCC 700610 / UA159).